A 499-amino-acid polypeptide reads, in one-letter code: ATP synthase subunit beta, chloroplastic (499 aa).

Residue 170–177 (GGAGVGKT) participates in ATP binding.

It belongs to the ATPase alpha/beta chains family. In terms of assembly, F-type ATPases have 2 components, CF(1) - the catalytic core - and CF(0) - the membrane proton channel. CF(1) has five subunits: alpha(3), beta(3), gamma(1), delta(1), epsilon(1). CF(0) has four main subunits: a(1), b(1), b'(1) and c(9-12).

The protein localises to the plastid. It localises to the chloroplast thylakoid membrane. It catalyses the reaction ATP + H2O + 4 H(+)(in) = ADP + phosphate + 5 H(+)(out). Functionally, produces ATP from ADP in the presence of a proton gradient across the membrane. The catalytic sites are hosted primarily by the beta subunits. In Ipomoea purpurea (Common morning glory), this protein is ATP synthase subunit beta, chloroplastic.